The primary structure comprises 478 residues: Glycogen synthase (478 aa).

Lys15 is an ADP-alpha-D-glucose binding site.

Belongs to the glycosyltransferase 1 family. Bacterial/plant glycogen synthase subfamily.

It carries out the reaction [(1-&gt;4)-alpha-D-glucosyl](n) + ADP-alpha-D-glucose = [(1-&gt;4)-alpha-D-glucosyl](n+1) + ADP + H(+). It functions in the pathway glycan biosynthesis; glycogen biosynthesis. Its function is as follows. Synthesizes alpha-1,4-glucan chains using ADP-glucose. The polypeptide is Glycogen synthase (Clostridium botulinum (strain Eklund 17B / Type B)).